A 498-amino-acid polypeptide reads, in one-letter code: ATP synthase subunit beta, chloroplastic (498 aa).

Position 172–179 (172–179 (GGAGVGKT)) interacts with ATP.

Belongs to the ATPase alpha/beta chains family. F-type ATPases have 2 components, CF(1) - the catalytic core - and CF(0) - the membrane proton channel. CF(1) has five subunits: alpha(3), beta(3), gamma(1), delta(1), epsilon(1). CF(0) has four main subunits: a(1), b(1), b'(1) and c(9-12).

Its subcellular location is the plastid. It localises to the chloroplast thylakoid membrane. The enzyme catalyses ATP + H2O + 4 H(+)(in) = ADP + phosphate + 5 H(+)(out). Its function is as follows. Produces ATP from ADP in the presence of a proton gradient across the membrane. The catalytic sites are hosted primarily by the beta subunits. The chain is ATP synthase subunit beta, chloroplastic from Populus trichocarpa (Western balsam poplar).